The sequence spans 572 residues: DnaJ protein ERDJ3A (572 aa).

Positions 1–23 (MVRTRLAISVVLVSTLLLLNVKA) are cleaved as a signal peptide. The J domain occupies 27–91 (DPYKVLGVSK…EKRKNYDLYG (65 aa)). Residues 394 to 423 (ITVKNLKSAVQELGKLLEGLEKKNKKVSSK) adopt a coiled-coil conformation. The interval 419–439 (KVSSKSQAGQAPNESSEKIPL) is disordered. Residues 422–432 (SKSQAGQAPNE) are compositionally biased toward polar residues. Residue Asn431 is glycosylated (N-linked (GlcNAc...) asparagine).

As to quaternary structure, interacts with BIP1 and BIP3. The interaction with BIP1 and BIP3 activates the ATPase enzyme activities of BIP1 and BIP3. In terms of processing, not N-glycosylated. Expressed in roots, leaves, stems, flowers, mature pollen grains and growing pollen tubes.

The protein resides in the endoplasmic reticulum lumen. In terms of biological role, regulates protein folding in the endoplasmic reticulum (ER) lumen. Functions probably as a co-molecular chaperone that is required for normal growth of pollen tubes under high-temperature stress. This is DnaJ protein ERDJ3A (ERDJ3A) from Arabidopsis thaliana (Mouse-ear cress).